Consider the following 362-residue polypeptide: Chorismate synthase (362 aa).

Residues Arg-48 and Arg-54 each coordinate NADP(+). Residues 125–127 (RSS), 238–239 (NA), Gly-278, 293–297 (KPTSS), and Arg-319 contribute to the FMN site.

The protein belongs to the chorismate synthase family. In terms of assembly, homotetramer. FMNH2 serves as cofactor.

It catalyses the reaction 5-O-(1-carboxyvinyl)-3-phosphoshikimate = chorismate + phosphate. It participates in metabolic intermediate biosynthesis; chorismate biosynthesis; chorismate from D-erythrose 4-phosphate and phosphoenolpyruvate: step 7/7. Its function is as follows. Catalyzes the anti-1,4-elimination of the C-3 phosphate and the C-6 proR hydrogen from 5-enolpyruvylshikimate-3-phosphate (EPSP) to yield chorismate, which is the branch point compound that serves as the starting substrate for the three terminal pathways of aromatic amino acid biosynthesis. This reaction introduces a second double bond into the aromatic ring system. The chain is Chorismate synthase from Psychromonas ingrahamii (strain DSM 17664 / CCUG 51855 / 37).